A 107-amino-acid chain; its full sequence is UPF0145 protein PC1_1703 (107 aa).

The protein belongs to the UPF0145 family.

The protein is UPF0145 protein PC1_1703 of Pectobacterium carotovorum subsp. carotovorum (strain PC1).